The following is a 512-amino-acid chain: Maturase K (512 aa).

The protein belongs to the intron maturase 2 family. MatK subfamily.

The protein resides in the plastid. Its subcellular location is the chloroplast. In terms of biological role, usually encoded in the trnK tRNA gene intron. Probably assists in splicing its own and other chloroplast group II introns. The polypeptide is Maturase K (Oenothera parviflora (Small-flowered evening primrose)).